The chain runs to 249 residues: Eukaryotic translation initiation factor 3 subunit K (249 aa).

A PCI domain is found at 46-222 (FDCYANLALL…VKVPTNKENE (177 aa)).

This sequence belongs to the eIF-3 subunit K family. Component of the eukaryotic translation initiation factor 3 (eIF-3) complex.

Its subcellular location is the cytoplasm. Functionally, component of the eukaryotic translation initiation factor 3 (eIF-3) complex, which is involved in protein synthesis of a specialized repertoire of mRNAs and, together with other initiation factors, stimulates binding of mRNA and methionyl-tRNAi to the 40S ribosome. The eIF-3 complex specifically targets and initiates translation of a subset of mRNAs involved in cell proliferation. This is Eukaryotic translation initiation factor 3 subunit K from Neosartorya fischeri (strain ATCC 1020 / DSM 3700 / CBS 544.65 / FGSC A1164 / JCM 1740 / NRRL 181 / WB 181) (Aspergillus fischerianus).